A 285-amino-acid chain; its full sequence is Urease accessory protein UreD (285 aa).

This sequence belongs to the UreD family. UreD, UreF and UreG form a complex that acts as a GTP-hydrolysis-dependent molecular chaperone, activating the urease apoprotein by helping to assemble the nickel containing metallocenter of UreC. The UreE protein probably delivers the nickel.

The protein localises to the cytoplasm. Functionally, required for maturation of urease via the functional incorporation of the urease nickel metallocenter. This is Urease accessory protein UreD from Azoarcus sp. (strain BH72).